We begin with the raw amino-acid sequence, 223 residues long: Phosphoribosylformylglycinamidine synthase subunit PurQ (223 aa).

Residues F3–V223 form the Glutamine amidotransferase type-1 domain. C85 serves as the catalytic Nucleophile. Active-site residues include H193 and E195.

In terms of assembly, part of the FGAM synthase complex composed of 1 PurL, 1 PurQ and 2 PurS subunits.

It is found in the cytoplasm. It carries out the reaction N(2)-formyl-N(1)-(5-phospho-beta-D-ribosyl)glycinamide + L-glutamine + ATP + H2O = 2-formamido-N(1)-(5-O-phospho-beta-D-ribosyl)acetamidine + L-glutamate + ADP + phosphate + H(+). The enzyme catalyses L-glutamine + H2O = L-glutamate + NH4(+). It participates in purine metabolism; IMP biosynthesis via de novo pathway; 5-amino-1-(5-phospho-D-ribosyl)imidazole from N(2)-formyl-N(1)-(5-phospho-D-ribosyl)glycinamide: step 1/2. Part of the phosphoribosylformylglycinamidine synthase complex involved in the purines biosynthetic pathway. Catalyzes the ATP-dependent conversion of formylglycinamide ribonucleotide (FGAR) and glutamine to yield formylglycinamidine ribonucleotide (FGAM) and glutamate. The FGAM synthase complex is composed of three subunits. PurQ produces an ammonia molecule by converting glutamine to glutamate. PurL transfers the ammonia molecule to FGAR to form FGAM in an ATP-dependent manner. PurS interacts with PurQ and PurL and is thought to assist in the transfer of the ammonia molecule from PurQ to PurL. This is Phosphoribosylformylglycinamidine synthase subunit PurQ from Staphylococcus aureus (strain MRSA252).